The primary structure comprises 557 residues: Urocanate hydratase (557 aa).

Residues 1 to 20 are disordered; the sequence is MSNPRHNEREVRSPRGDELN. NAD(+) is bound by residues 52–53, Q130, 176–178, E196, R201, 242–243, 263–267, 273–274, and Y322; these read GG, GMG, NA, QTSAH, and YL. Residue C410 is part of the active site. NAD(+) is bound at residue G492.

It belongs to the urocanase family. Requires NAD(+) as cofactor.

Its subcellular location is the cytoplasm. It catalyses the reaction 4-imidazolone-5-propanoate = trans-urocanate + H2O. Its pathway is amino-acid degradation; L-histidine degradation into L-glutamate; N-formimidoyl-L-glutamate from L-histidine: step 2/3. In terms of biological role, catalyzes the conversion of urocanate to 4-imidazolone-5-propionate. The polypeptide is Urocanate hydratase (Brucella abortus (strain S19)).